We begin with the raw amino-acid sequence, 655 residues long: Tetratricopeptide repeat protein 30 homolog (655 aa).

TPR repeat units lie at residues 10 to 43 (EGHV…ANTR), 44 to 76 (AGLS…APKE), 143 to 176 (ADTL…GGFN), 178 to 210 (LVAY…GMRN), 385 to 418 (LAAK…YLPV), 450 to 484 (SIWR…HSDD), and 534 to 567 (CIVN…GSGN).

It belongs to the TTC30/dfy-1/fleer family.

Its subcellular location is the cell projection. It localises to the cilium. Functionally, required for polyglutamylation of axonemal tubulin in sensory cilia. Plays a role in anterograde intraflagellar transport (IFT), the process by which cilia precursors are transported from the base of the cilium to the site of their incorporation at the tip. The chain is Tetratricopeptide repeat protein 30 homolog from Drosophila melanogaster (Fruit fly).